Reading from the N-terminus, the 525-residue chain is Neuropilin and tolloid-like protein 2 (525 aa).

The first 22 residues, 1 to 22, serve as a signal peptide directing secretion; it reads MALERLCSVLKVLLITVLVVEG. Topologically, residues 23-347 are extracellular; the sequence is IAVAQKTQDG…GVFEQITKTH (325 aa). 7 cysteine pairs are disulfide-bonded: Cys45–Cys72, Cys100–Cys122, Cys177–Cys207, Cys234–Cys256, Cys297–Cys309, Cys304–Cys322, and Cys316–Cys331. 2 consecutive CUB domains span residues 45 to 159 and 177 to 292; these read CGIW…YSFI and CQFE…FTSF. The LDL-receptor class A domain maps to 296–332; it reads PCTSSTFFCHSNMCINNSLVCNGVQNCAYPWDENHCK. Residue Asn311 is glycosylated (N-linked (GlcNAc...) asparagine). Residues 348–368 traverse the membrane as a helical segment; it reads GTIIGITSGIVLVLLIISILV. Topologically, residues 369-525 are cytoplasmic; that stretch reads QVKQPRKKVM…SAQASISIDF (157 aa). Ser409 carries the phosphoserine modification.

In terms of assembly, interacts with GRIK2 and GRIK3, but neither with AMPA-nor with NMDA-sensitive glutamate receptors. Post-translationally, N-glycosylated.

Its subcellular location is the membrane. In terms of biological role, accessory subunit of neuronal kainate-sensitive glutamate receptors, GRIK2 and GRIK3. Increases kainate-receptor channel activity, slowing the decay kinetics of the receptors, without affecting their expression at the cell surface, and increasing the open probability of the receptor channels. Modulates the agonist sensitivity of kainate receptors. Slows the decay of kainate receptor-mediated excitatory postsynaptic currents (EPSCs), thus directly influencing synaptic transmission. In Homo sapiens (Human), this protein is Neuropilin and tolloid-like protein 2 (NETO2).